The sequence spans 106 residues: Phosphoribosyl-ATP pyrophosphatase (106 aa).

The protein belongs to the PRA-PH family.

The protein localises to the cytoplasm. The enzyme catalyses 1-(5-phospho-beta-D-ribosyl)-ATP + H2O = 1-(5-phospho-beta-D-ribosyl)-5'-AMP + diphosphate + H(+). Its pathway is amino-acid biosynthesis; L-histidine biosynthesis; L-histidine from 5-phospho-alpha-D-ribose 1-diphosphate: step 2/9. The polypeptide is Phosphoribosyl-ATP pyrophosphatase (Geotalea daltonii (strain DSM 22248 / JCM 15807 / FRC-32) (Geobacter daltonii)).